The chain runs to 250 residues: Proteasome subunit alpha type-4 (250 aa).

The protein belongs to the peptidase T1A family. In terms of assembly, the 26S proteasome consists of a 20S proteasome core and two 19S regulatory subunits. The 20S proteasome core is composed of 28 subunits that are arranged in four stacked rings, resulting in a barrel-shaped structure. The two end rings are each formed by seven alpha subunits, and the two central rings are each formed by seven beta subunits. The catalytic chamber with the active sites is on the inside of the barrel.

It is found in the cytoplasm. Its subcellular location is the nucleus. In terms of biological role, the proteasome is a multicatalytic proteinase complex which is characterized by its ability to cleave peptides with Arg, Phe, Tyr, Leu, and Glu adjacent to the leaving group at neutral or slightly basic pH. The proteasome has an ATP-dependent proteolytic activity. The sequence is that of Proteasome subunit alpha type-4 (psmA4) from Dictyostelium discoideum (Social amoeba).